Reading from the N-terminus, the 396-residue chain is Activity-regulated cytoskeleton-associated protein (396 aa).

A coiled-coil region spans residues Ser54–Tyr78. The segment at Lys89–Glu100 is interaction with SH3GL1 or SH3GL3. Residues Gln195–Phe214 are interaction with DNM2. Ser260 is modified (phosphoserine). Glycyl lysine isopeptide (Lys-Gly) (interchain with G-Cter in ubiquitin) cross-links involve residues Lys268 and Lys269. Phosphothreonine is present on Thr278. The interval Gly358 to Glu396 is disordered. Residues Ala382–Glu396 show a composition bias toward polar residues.

It belongs to the ARC/ARG3.1 family. Homooligomer; homooligomerizes into virion-like capsids. Interacts with SH3GL1/endophilin-2, SH3GL3/endophilin-3 and DNM2/DYN2. Interacts with CAMK2B (in the kinase inactive state); leading to target ARC to inactive synapses. Interacts with PSEN1. Interacts with GRIN2A and GRIN2B; inhibiting homooligomerization. Palmitoylation anchors the protein into the membrane by allowing direct insertion into the hydrophobic core of the lipid bilayer. Post-translationally, ubiquitinated by UBE3A, leading to its degradation by the proteasome, thereby promoting AMPA receptors (AMPARs) expression at synapses. Ubiquitinated by RNF216 at Lys-268 and Lys-269 limiting ARC protein levels induced by synaptic activity and thus regulating ARC-dependent forms of synaptic plasticity. In terms of processing, phosphorylation at Ser-260 by CaMK2 prevents homooligomerization into virion-like capsids by disrupting an interaction surface essential for high-order oligomerization. Phosphorylation by CaMK2 inhibits synaptic activity. As to expression, expressed exclusively in certain parts of the brain including cortex and molecular layer of the hippocampus. Typically expressed at high level in a minority of neurons. Basal expression higher in cortex than in hippocampus, highest in visual cortex.

Its subcellular location is the extracellular vesicle membrane. It is found in the postsynaptic cell membrane. The protein localises to the synapse. The protein resides in the postsynaptic density. It localises to the early endosome membrane. Its subcellular location is the cell projection. It is found in the dendrite. The protein localises to the cytoplasm. The protein resides in the cytoskeleton. It localises to the cell cortex. Its subcellular location is the dendritic spine. It is found in the cytoplasmic vesicle. The protein localises to the secretory vesicle. The protein resides in the acrosome. It localises to the clathrin-coated vesicle membrane. Functionally, master regulator of synaptic plasticity that self-assembles into virion-like capsids that encapsulate RNAs and mediate intercellular RNA transfer in the nervous system. ARC protein is released from neurons in extracellular vesicles that mediate the transfer of ARC mRNA into new target cells, where ARC mRNA can undergo activity-dependent translation. ARC capsids are endocytosed and are able to transfer ARC mRNA into the cytoplasm of neurons. Acts as a key regulator of synaptic plasticity: required for protein synthesis-dependent forms of long-term potentiation (LTP) and depression (LTD) and for the formation of long-term memory. Regulates synaptic plasticity by promoting endocytosis of AMPA receptors (AMPARs) in response to synaptic activity: this endocytic pathway maintains levels of surface AMPARs in response to chronic changes in neuronal activity through synaptic scaling, thereby contributing to neuronal homeostasis. Acts as a postsynaptic mediator of activity-dependent synapse elimination in the developing cerebellum by mediating elimination of surplus climbing fiber synapses. Accumulates at weaker synapses, probably to prevent their undesired enhancement. This suggests that ARC-containing virion-like capsids may be required to eliminate synaptic material. Required to transduce experience into long-lasting changes in visual cortex plasticity and for long-term memory. Involved in postsynaptic trafficking and processing of amyloid-beta A4 (APP) via interaction with PSEN1. In addition to its role in synapses, also involved in the regulation of the immune system: specifically expressed in skin-migratory dendritic cells and regulates fast dendritic cell migration, thereby regulating T-cell activation. The sequence is that of Activity-regulated cytoskeleton-associated protein from Rattus norvegicus (Rat).